A 99-amino-acid chain; its full sequence is Bombyxin A-1 homolog (99 aa).

The N-terminal stretch at 1-19 (MKTQVLFLVFALAAVMVSG) is a signal peptide. Cystine bridges form between cysteine 27–cysteine 86, cysteine 39–cysteine 99, and cysteine 85–cysteine 90. Positions 48 to 76 (TPYISPENEGYGWRWLEPQRARQLDGARG) are cleaved as a propeptide — c peptide like.

It belongs to the insulin family. Heterodimer of a B chain and an A chain linked by two disulfide bonds.

The protein resides in the secreted. Its function is as follows. Brain peptide responsible for activation of prothoracic glands to produce ecdysone in insects. In Samia cynthia (Ailanthus silkmoth), this protein is Bombyxin A-1 homolog (SBXA1).